The following is a 370-amino-acid chain: Polygalacturonase 1 (370 aa).

A signal peptide spans 1 to 18 (MRTSILSMLALGAAAVSA). Cys36 and Cys51 are disulfide-bonded. PbH1 repeat units lie at residues 163–194 (ADNL…DVGE), 195–216 (STYI…AINS), 217–237 (GENI…SIGS), 246–267 (VKNV…RIKT), and 275–297 (VADV…VIEQ). The Proton donor role is filled by Asp209. Cys211 and Cys227 are oxidised to a cystine. His231 is a catalytic residue. Asn248 is a glycosylation site (N-linked (GlcNAc...) asparagine). Intrachain disulfides connect Cys337–Cys342 and Cys361–Cys370.

Belongs to the glycosyl hydrolase 28 family.

It is found in the secreted. The enzyme catalyses (1,4-alpha-D-galacturonosyl)n+m + H2O = (1,4-alpha-D-galacturonosyl)n + (1,4-alpha-D-galacturonosyl)m.. The chain is Polygalacturonase 1 (PG1) from Penicillium olsonii.